A 311-amino-acid polypeptide reads, in one-letter code: Methenyltetrahydromethanopterin cyclohydrolase (311 aa).

It belongs to the MCH family.

The protein localises to the cytoplasm. The enzyme catalyses 5,10-methenyl-5,6,7,8-tetrahydromethanopterin + H2O = N(5)-formyl-5,6,7,8-tetrahydromethanopterin + H(+). In terms of biological role, catalyzes the hydrolysis of methenyl-H(4)MPT(+) to 5-formyl-H(4)MPT. The protein is Methenyltetrahydromethanopterin cyclohydrolase of Halobacterium salinarum (strain ATCC 29341 / DSM 671 / R1).